Consider the following 694-residue polypeptide: Frizzled-8 (694 aa).

An N-terminal signal peptide occupies residues 1–27 (MEWGYLLEVTSLLAALALLQRSSGAAA). Residues 28-275 (ASAKELACQE…NPFFSQDERA (248 aa)) are Extracellular-facing. Residues 30 to 151 (AKELACQEIT…GNPDTLCMDY (122 aa)) enclose the FZ domain. 5 disulfide bridges follow: Cys-35/Cys-96, Cys-43/Cys-89, Cys-80/Cys-118, Cys-107/Cys-148, and Cys-111/Cys-135. A glycan (N-linked (GlcNAc...) asparagine) is linked at Asn-49. 71 to 78 (QFWPLVEI) serves as a coordination point for hexadecanoate. The tract at residues 95 to 100 (ICLEDY) is wnt-binding. The tract at residues 147–152 (LCMDYN) is wnt-binding. Asn-152 carries N-linked (GlcNAc...) asparagine glycosylation. A disordered region spans residues 155–226 (DLTTAAPSPP…KARPPGGGAA (72 aa)). Over residues 161 to 175 (PSPPRRLPPPPPGEQ) the composition is skewed to pro residues. Residues 176 to 186 (PPSGSGHGRPP) are compositionally biased toward low complexity. Residues 210–225 (RGGGGGGKARPPGGGA) are compositionally biased toward gly residues. The helical transmembrane segment at 276-296 (FTVFWIGLWSVLCFVSTFATV) threads the bilayer. Topologically, residues 297-312 (STFLIDMERFKYPERP) are cytoplasmic. A helical transmembrane segment spans residues 313–333 (IIFLSACYLFVSVGYLVRLVA). Over 334–396 (GHEKVACSGG…RYETTGPALC (63 aa)) the chain is Extracellular. A helical transmembrane segment spans residues 397 to 417 (TVVFLLVYFFGMASSIWWVIL). Topologically, residues 418-439 (SLTWFLAAGMKWGNEAIAGYSQ) are cytoplasmic. Residues 440–460 (YFHLAAWLVPSVKSIAVLALS) traverse the membrane as a helical segment. Residues 461-483 (SVDGDPVAGICYVGNQSLDNLRG) are Extracellular-facing. Asn-475 carries an N-linked (GlcNAc...) asparagine glycan. A helical transmembrane segment spans residues 484-504 (FVLAPLVIYLFIGTMFLLAGF). Residues 505 to 532 (VSLFRIRSVIKQQDGPTKTHKLEKLMIR) are Cytoplasmic-facing. The helical transmembrane segment at 533–553 (LGLFTVLYTVPAAVVVACLFY) threads the bilayer. Residues 554–584 (EQHNRPRWEATHNCPCLRDLQPDQARRPDYA) are Extracellular-facing. Residues 585-605 (VFMLKYFMCLVVGITSGVWVW) form a helical membrane-spanning segment. Residues 606–694 (SGKTLESWRS…YPKQMPLSQV (89 aa)) are Cytoplasmic-facing. The short motif at 608 to 613 (KTLESW) is the Lys-Thr-X-X-X-Trp motif, mediates interaction with the PDZ domain of Dvl family members element. Residues 648–664 (GGGGPGGGGGPGGGGGS) show a composition bias toward gly residues. Residues 648–668 (GGGGPGGGGGPGGGGGSLYSD) are disordered. Residues 692–694 (SQV) carry the PDZ-binding motif.

It belongs to the G-protein coupled receptor Fz/Smo family. As to quaternary structure, component of a Wnt-signaling complex that contains a WNT protein, a FZD protein and LRP5 or LRP6. Interacts directly with LRP5 or LRP6; the interaction is promoted by Wnt-binding and signaling and inhibited by DKK1. Interacts with GPOC, RSPO1 and RSPO3. Interacts with glypican GPC3. Ubiquitinated by ZNRF3, leading to its degradation by the proteasome. In terms of tissue distribution, most abundant in fetal kidney, followed by brain and lung. In adult tissues, expressed in kidney, heart, pancreas and skeletal muscle.

The protein localises to the membrane. It is found in the golgi apparatus. The protein resides in the cell membrane. Receptor for Wnt proteins. Component of the Wnt-Fzd-LRP5-LRP6 complex that triggers beta-catenin signaling through inducing aggregation of receptor-ligand complexes into ribosome-sized signalosomes. The beta-catenin canonical signaling pathway leads to the activation of disheveled proteins, inhibition of GSK-3 kinase, nuclear accumulation of beta-catenin and activation of Wnt target genes. A second signaling pathway involving PKC and calcium fluxes has been seen for some family members, but it is not yet clear if it represents a distinct pathway or if it can be integrated in the canonical pathway, as PKC seems to be required for Wnt-mediated inactivation of GSK-3 kinase. Both pathways seem to involve interactions with G-proteins. May be involved in transduction and intercellular transmission of polarity information during tissue morphogenesis and/or in differentiated tissues. Coreceptor along with RYK of Wnt proteins, such as WNT1. In Homo sapiens (Human), this protein is Frizzled-8 (FZD8).